A 145-amino-acid chain; its full sequence is Ribosomal RNA large subunit methyltransferase H (145 aa).

S-adenosyl-L-methionine-binding positions include leucine 68, glycine 95, and 113 to 118; that span reads FSKMTF.

Belongs to the RNA methyltransferase RlmH family. In terms of assembly, homodimer.

Its subcellular location is the cytoplasm. It catalyses the reaction pseudouridine(1915) in 23S rRNA + S-adenosyl-L-methionine = N(3)-methylpseudouridine(1915) in 23S rRNA + S-adenosyl-L-homocysteine + H(+). Functionally, specifically methylates the pseudouridine at position 1915 (m3Psi1915) in 23S rRNA. The protein is Ribosomal RNA large subunit methyltransferase H of Mycoplasmopsis pulmonis (strain UAB CTIP) (Mycoplasma pulmonis).